Consider the following 587-residue polypeptide: Polyadenylate-binding protein-interacting protein 3 (587 aa).

The region spanning L51–P132 is the Sm domain. The disordered stretch occupies residues A422–G503. Residues P431–E464 are compositionally biased toward low complexity. The short motif at T467–F475 is the PAM2-like 1; degenerate element. Residues K476–P486 carry the PAM2-like 2 motif. Over residues P486 to S498 the composition is skewed to polar residues.

The protein is Polyadenylate-binding protein-interacting protein 3 (CID3) of Arabidopsis thaliana (Mouse-ear cress).